The sequence spans 502 residues: Glutamate--tRNA ligase (502 aa).

Positions 21-31 (PSPTGVPHVGM) match the 'HIGH' region motif. Positions 265–269 (KLSKR) match the 'KMSKS' region motif. Lysine 268 serves as a coordination point for ATP.

Belongs to the class-I aminoacyl-tRNA synthetase family. Glutamate--tRNA ligase type 1 subfamily. As to quaternary structure, monomer.

It is found in the cytoplasm. The catalysed reaction is tRNA(Glu) + L-glutamate + ATP = L-glutamyl-tRNA(Glu) + AMP + diphosphate. Its function is as follows. Catalyzes the attachment of glutamate to tRNA(Glu) in a two-step reaction: glutamate is first activated by ATP to form Glu-AMP and then transferred to the acceptor end of tRNA(Glu). This is Glutamate--tRNA ligase from Mycobacterium leprae (strain TN).